The primary structure comprises 493 residues: Guanosine-5'-triphosphate,3'-diphosphate pyrophosphatase (493 aa).

Belongs to the GppA/Ppx family. GppA subfamily.

It catalyses the reaction guanosine 3'-diphosphate 5'-triphosphate + H2O = guanosine 3',5'-bis(diphosphate) + phosphate + H(+). It participates in purine metabolism; ppGpp biosynthesis; ppGpp from GTP: step 2/2. Catalyzes the conversion of pppGpp to ppGpp. Guanosine pentaphosphate (pppGpp) is a cytoplasmic signaling molecule which together with ppGpp controls the 'stringent response', an adaptive process that allows bacteria to respond to amino acid starvation, resulting in the coordinated regulation of numerous cellular activities. This is Guanosine-5'-triphosphate,3'-diphosphate pyrophosphatase from Salmonella heidelberg (strain SL476).